The sequence spans 367 residues: Homoserine O-acetyltransferase (367 aa).

Positions 41 to 339 (NLIVLEHALT…PVGHDAFLTE (299 aa)) constitute an AB hydrolase-1 domain. The active-site Nucleophile is Ser136. Arg205 lines the substrate pocket. Active-site residues include Asp303 and His333. Asp334 is a substrate binding site.

It belongs to the AB hydrolase superfamily. MetX family. Homodimer.

The protein resides in the cytoplasm. The catalysed reaction is L-homoserine + acetyl-CoA = O-acetyl-L-homoserine + CoA. The protein operates within amino-acid biosynthesis; L-methionine biosynthesis via de novo pathway; O-acetyl-L-homoserine from L-homoserine: step 1/1. Its function is as follows. Transfers an acetyl group from acetyl-CoA to L-homoserine, forming acetyl-L-homoserine. This Corynebacterium diphtheriae (strain ATCC 700971 / NCTC 13129 / Biotype gravis) protein is Homoserine O-acetyltransferase.